Reading from the N-terminus, the 173-residue chain is Crossover junction endodeoxyribonuclease RuvC (173 aa).

Catalysis depends on residues Asp8, Glu67, and Asp139. The Mg(2+) site is built by Asp8, Glu67, and Asp139.

This sequence belongs to the RuvC family. Homodimer which binds Holliday junction (HJ) DNA. The HJ becomes 2-fold symmetrical on binding to RuvC with unstacked arms; it has a different conformation from HJ DNA in complex with RuvA. In the full resolvosome a probable DNA-RuvA(4)-RuvB(12)-RuvC(2) complex forms which resolves the HJ. It depends on Mg(2+) as a cofactor.

It localises to the cytoplasm. The enzyme catalyses Endonucleolytic cleavage at a junction such as a reciprocal single-stranded crossover between two homologous DNA duplexes (Holliday junction).. The RuvA-RuvB-RuvC complex processes Holliday junction (HJ) DNA during genetic recombination and DNA repair. Endonuclease that resolves HJ intermediates. Cleaves cruciform DNA by making single-stranded nicks across the HJ at symmetrical positions within the homologous arms, yielding a 5'-phosphate and a 3'-hydroxyl group; requires a central core of homology in the junction. The consensus cleavage sequence is 5'-(A/T)TT(C/G)-3'. Cleavage occurs on the 3'-side of the TT dinucleotide at the point of strand exchange. HJ branch migration catalyzed by RuvA-RuvB allows RuvC to scan DNA until it finds its consensus sequence, where it cleaves and resolves the cruciform DNA. The protein is Crossover junction endodeoxyribonuclease RuvC of Vibrio campbellii (strain ATCC BAA-1116).